A 201-amino-acid polypeptide reads, in one-letter code: MSQQRILPQSKETLLQSYNKRLKDDIKSIMDNFTEIIKTAKIEEEHQVSRSTQGEQDNYEMHVRSANIVRAGESLMKLVSDLKQFLILNDFPSVNESINQRNQQLRTLREECDKKLIALRDDIAIDLYELEEEYYSSSYSVCDPSDLPLCEVYWNRESTASSPEDLSVPLAPIMAEASTVTSQIHTPPHLNGHGAGMTEHT.

A coiled-coil region spans residues 93–123 (SVNESINQRNQQLRTLREECDKKLIALRDDI). Residues 182–201 (SQIHTPPHLNGHGAGMTEHT) form a disordered region.

The protein belongs to the Mediator complex subunit 22 family. Component of the Mediator complex.

It localises to the nucleus. In terms of biological role, component of the Mediator complex, a coactivator involved in the regulated transcription of nearly all RNA polymerase II-dependent genes. Mediator functions as a bridge to convey information from gene-specific regulatory proteins to the basal RNA polymerase II transcription machinery. Mediator is recruited to promoters by direct interactions with regulatory proteins and serves as a scaffold for the assembly of a functional preinitiation complex with RNA polymerase II and the general transcription factors. This is Mediator of RNA polymerase II transcription subunit 22 (med22) from Xenopus laevis (African clawed frog).